We begin with the raw amino-acid sequence, 153 residues long: Small ribosomal subunit protein uS13 (153 aa).

Residues 134–153 form a disordered region; the sequence is GQRTKSNGRRGRSMGVSRKK.

The protein belongs to the universal ribosomal protein uS13 family.

Its subcellular location is the cytoplasm. In terms of biological role, located at the top of the head of the 40S subunit, it contacts several helices of the 18S rRNA. In Encephalitozoon cuniculi (strain GB-M1) (Microsporidian parasite), this protein is Small ribosomal subunit protein uS13 (RPS18).